The following is a 101-amino-acid chain: Integration host factor subunit alpha (101 aa).

This sequence belongs to the bacterial histone-like protein family. In terms of assembly, heterodimer of an alpha and a beta chain.

Functionally, this protein is one of the two subunits of integration host factor, a specific DNA-binding protein that functions in genetic recombination as well as in transcriptional and translational control. This chain is Integration host factor subunit alpha, found in Saccharophagus degradans (strain 2-40 / ATCC 43961 / DSM 17024).